Consider the following 123-residue polypeptide: Large ribosomal subunit protein bL19 (123 aa).

This sequence belongs to the bacterial ribosomal protein bL19 family.

This protein is located at the 30S-50S ribosomal subunit interface and may play a role in the structure and function of the aminoacyl-tRNA binding site. This is Large ribosomal subunit protein bL19 from Ureaplasma urealyticum serovar 10 (strain ATCC 33699 / Western).